Reading from the N-terminus, the 143-residue chain is Transcriptional regulator MraZ (143 aa).

2 SpoVT-AbrB domains span residues 5–47 and 76–119; these read THSP…TTRE and ANAE…DAGT.

This sequence belongs to the MraZ family. In terms of assembly, forms oligomers.

The protein localises to the cytoplasm. Its subcellular location is the nucleoid. This is Transcriptional regulator MraZ from Clavibacter michiganensis subsp. michiganensis (strain NCPPB 382).